Reading from the N-terminus, the 345-residue chain is Transcription initiation factor IIB (345 aa).

The segment at 8–40 (VGRNCPHCSAVDSLQTDDVMGEVACTACALVVA) adopts a TFIIB-type zinc-finger fold. Zn(2+)-binding residues include cysteine 12, cysteine 15, cysteine 32, and cysteine 35. 2 disordered regions span residues 59-89 (DVDHHRERNANPTAATSAAGSLSAADPHMSS) and 318-345 (PTAGKRKVDKNSEPEASGGTKRVKREET). Residues 71 to 83 (TAATSAAGSLSAA) are compositionally biased toward low complexity.

Belongs to the TFIIB family. As to quaternary structure, monomer. Interacts with RNA polymerase II subunits RPB1 and RPB2. Interacts with TBP; the interaction is direct.

It localises to the nucleus. In terms of biological role, specifically binds to the promoter of the spliced leader (SL) RNA gene and thus is essential for SLRNA transcription. The chain is Transcription initiation factor IIB from Trypanosoma brucei brucei.